We begin with the raw amino-acid sequence, 153 residues long: Aspartate carbamoyltransferase regulatory chain (153 aa).

Residues cysteine 109, cysteine 114, cysteine 138, and cysteine 141 each coordinate Zn(2+).

This sequence belongs to the PyrI family. In terms of assembly, contains catalytic and regulatory chains. It depends on Zn(2+) as a cofactor.

Functionally, involved in allosteric regulation of aspartate carbamoyltransferase. This chain is Aspartate carbamoyltransferase regulatory chain, found in Klebsiella pneumoniae subsp. pneumoniae (strain ATCC 700721 / MGH 78578).